The chain runs to 249 residues: Probable transcriptional regulatory protein OTBS_0251 (249 aa).

The protein belongs to the TACO1 family.

The protein localises to the cytoplasm. This chain is Probable transcriptional regulatory protein OTBS_0251, found in Orientia tsutsugamushi (strain Boryong) (Rickettsia tsutsugamushi).